Here is a 579-residue protein sequence, read N- to C-terminus: Effector protein HopAB3 (579 aa).

Disordered stretches follow at residues 1–140 (MAGI…TGAV), 214–294 (VRQQ…NQVP), and 384–408 (PARA…PDSA). Positions 1–336 (MAGINGAGPS…LRAALERHIL (336 aa)) are host recognition; Pto interaction. Low complexity-rich tracts occupy residues 23–39 (ASGG…SSNS), 89–101 (RPQE…APQA), 219–248 (ASAP…ESSS), 266–281 (NQRR…ASQR), and 384–402 (PARA…ATVS). Residues 337–579 (HRRPIPMDIA…IAKYAFRIVP (243 aa)) are E3 ubiquitin-protein ligase.

Belongs to the HopAB family. Interacts physically with plant cell Pto. Post-translationally, auto-ubiquitinated.

It is found in the secreted. In terms of biological role, effector protein involved in gene-for-gene resistance in tomato plants. It is recognized by the host Pto resistance protein and elicits Pto and Prf-dependent hypersensitive response (HR) and programmed cell death (PCD), resulting in host immunity. In susceptible plants, acts as a virulence factor by suppressing PCD and HR-based plant immunity. This function requires its E3 ubiquitin ligase activity probably by recruiting E2 enzymes and transferring ubiquitin molecules to cellular proteins involved in regulation of PCD and targeting them for degradation. Enhances the development of disease symptoms and bacterial growth. This is Effector protein HopAB3 (hopAB3) from Pseudomonas syringae pv. tomato.